Reading from the N-terminus, the 533-residue chain is Beta-glucosidase 22 (533 aa).

An N-terminal signal peptide occupies residues 1-24; sequence MAVSSSTSTCSSFSLLLLLLLLAA. N-linked (GlcNAc...) asparagine glycosylation occurs at N41. Residues Q61, H161, and 206-207 contribute to the a beta-D-glucoside site; that span reads DE. The active-site Proton donor is the E207. An intrachain disulfide couples C226 to C234. 2 N-linked (GlcNAc...) asparagine glycosylation sites follow: N233 and N238. A beta-D-glucoside-binding residues include Y350 and E421. The active-site Nucleophile is E421. N-linked (GlcNAc...) asparagine glycosylation occurs at N435. Residues W466 and F482 each contribute to the a beta-D-glucoside site.

The protein belongs to the glycosyl hydrolase 1 family.

The catalysed reaction is Hydrolysis of terminal, non-reducing beta-D-glucosyl residues with release of beta-D-glucose.. The protein is Beta-glucosidase 22 (BGLU22) of Oryza sativa subsp. japonica (Rice).